The following is a 342-amino-acid chain: Pyrophosphate--fructose 6-phosphate 1-phosphotransferase (342 aa).

Gly-10 serves as a coordination point for diphosphate. A Mg(2+)-binding site is contributed by Glu-103. Substrate is bound by residues 126–128 (TID), Arg-163, 170–172 (MGR), Glu-222, Arg-266, and 272–275 (HVQR). Catalysis depends on Asp-128, which acts as the Proton acceptor.

The protein belongs to the phosphofructokinase type A (PFKA) family. Mixed-substrate PFK group III subfamily. In terms of assembly, homodimer or homotetramer. The cofactor is Mg(2+).

The protein resides in the cytoplasm. It carries out the reaction beta-D-fructose 6-phosphate + diphosphate = beta-D-fructose 1,6-bisphosphate + phosphate + H(+). It functions in the pathway carbohydrate degradation; glycolysis; D-glyceraldehyde 3-phosphate and glycerone phosphate from D-glucose: step 3/4. Its activity is regulated as follows. Non-allosteric. In terms of biological role, catalyzes the phosphorylation of D-fructose 6-phosphate, the first committing step of glycolysis. Uses inorganic phosphate (PPi) as phosphoryl donor instead of ATP like common ATP-dependent phosphofructokinases (ATP-PFKs), which renders the reaction reversible, and can thus function both in glycolysis and gluconeogenesis. Consistently, PPi-PFK can replace the enzymes of both the forward (ATP-PFK) and reverse (fructose-bisphosphatase (FBPase)) reactions. This Streptomyces coelicolor (strain ATCC BAA-471 / A3(2) / M145) protein is Pyrophosphate--fructose 6-phosphate 1-phosphotransferase.